We begin with the raw amino-acid sequence, 494 residues long: Glycogen synthase (494 aa).

An ADP-alpha-D-glucose-binding site is contributed by Lys-15.

This sequence belongs to the glycosyltransferase 1 family. Bacterial/plant glycogen synthase subfamily.

It catalyses the reaction [(1-&gt;4)-alpha-D-glucosyl](n) + ADP-alpha-D-glucose = [(1-&gt;4)-alpha-D-glucosyl](n+1) + ADP + H(+). It functions in the pathway glycan biosynthesis; glycogen biosynthesis. Functionally, synthesizes alpha-1,4-glucan chains using ADP-glucose. The polypeptide is Glycogen synthase (Albidiferax ferrireducens (strain ATCC BAA-621 / DSM 15236 / T118) (Rhodoferax ferrireducens)).